The chain runs to 557 residues: uncharacterized protein (557 aa).

The DhaL domain maps to 7–206 (SSFIDMLRLG…FACFLEGMLS (200 aa)).

This is an uncharacterized protein from Mycoplasma genitalium (strain ATCC 33530 / DSM 19775 / NCTC 10195 / G37) (Mycoplasmoides genitalium).